A 170-amino-acid polypeptide reads, in one-letter code: CASP-like protein 1F1 (170 aa).

Topologically, residues 1 to 16 (MMGDNEGRRTPLLNLG) are cytoplasmic. Residues 17 to 37 (VQVSMRVLIIGAAMASMWVMI) traverse the membrane as a helical segment. Over 38–62 (TNREVASVYGIAFEAKYSYSSAFRY) the chain is Extracellular. A helical transmembrane segment spans residues 63–83 (LVYAQIAVCAATLFTLVWACL). Over 84-88 (AVRRR) the chain is Cytoplasmic. The chain crosses the membrane as a helical span at residues 89–109 (GLVFALFFFDLLTTLTAISAF). The Extracellular portion of the chain corresponds to 110 to 141 (SAAFAEGYVGKYGNKQAGWLPICGYVHVYCSR). A helical membrane pass occupies residues 142-162 (VTISLAMSFASFVLLFILTVL). The Cytoplasmic portion of the chain corresponds to 163–170 (TASSARHY).

This sequence belongs to the Casparian strip membrane proteins (CASP) family. In terms of assembly, homodimer and heterodimers.

The protein resides in the cell membrane. This chain is CASP-like protein 1F1, found in Arabidopsis lyrata subsp. lyrata (Lyre-leaved rock-cress).